Reading from the N-terminus, the 383-residue chain is MRTRRDVPADRSGRSRVSRHPGLSVPSRTLEPVQELHDAPLAPLTTFRLGGPATRLLTATTDAEVIAAVREADDTGTPLLLIGGGSNLVIGDKGFDGTALHIATRGFRLDGTTLELAAGEIWTDAVARTVEAGLAGVECLAGIPGSAGATPIQNVGAYGQEVSATITEVTAYDRRSGETVALSNADCAFSYRHSRFKAEPERYVVLRVRFELENADGLSAPLRYAETARALGVEAGDRVPLTAARETVLRLRAGKGMVLDPEDHDTWSAGSFFTNPILTDEEFAAFRSRVAGRLGAAVEPPAFPAGEGRVKTSAAWLIDKAGFTKGYGTGPARISTKHTLALTNRGEATTEDLLALAREVVAGVHEAFGVTLVNEPVTVGVAL.

Residues 1–13 (MRTRRDVPADRSG) are compositionally biased toward basic and acidic residues. The segment at 1 to 26 (MRTRRDVPADRSGRSRVSRHPGLSVP) is disordered. The FAD-binding PCMH-type domain maps to 49-215 (LGGPATRLLT…LRVRFELENA (167 aa)). Residue arginine 192 is part of the active site. Serine 271 (proton donor) is an active-site residue. Glutamate 375 is an active-site residue.

The protein belongs to the MurB family. The cofactor is FAD.

Its subcellular location is the cytoplasm. The catalysed reaction is UDP-N-acetyl-alpha-D-muramate + NADP(+) = UDP-N-acetyl-3-O-(1-carboxyvinyl)-alpha-D-glucosamine + NADPH + H(+). The protein operates within cell wall biogenesis; peptidoglycan biosynthesis. Cell wall formation. The chain is UDP-N-acetylenolpyruvoylglucosamine reductase from Streptomyces coelicolor (strain ATCC BAA-471 / A3(2) / M145).